The following is an 879-amino-acid chain: Phosphoenolpyruvate carboxylase (879 aa).

Active-site residues include His-138 and Lys-545.

The protein belongs to the PEPCase type 1 family. It depends on Mg(2+) as a cofactor.

It carries out the reaction oxaloacetate + phosphate = phosphoenolpyruvate + hydrogencarbonate. In terms of biological role, forms oxaloacetate, a four-carbon dicarboxylic acid source for the tricarboxylic acid cycle. The sequence is that of Phosphoenolpyruvate carboxylase from Haemophilus influenzae (strain PittEE).